Here is a 389-residue protein sequence, read N- to C-terminus: Sterol methyltransferase-like 1 (389 aa).

A helical membrane pass occupies residues 25 to 45 (IAAGVTAAVVIGGYIWIITEL).

Belongs to the class I-like SAM-binding methyltransferase superfamily. Erg6/SMT family.

Its subcellular location is the microsome membrane. Its function is as follows. Unable to convert squalene, botryococcene, cycloartenol, zymosterol or lanosterol to mono-, di-, tri- or tetramethylated derivatives. The polypeptide is Sterol methyltransferase-like 1 (SMT-1) (Botryococcus braunii (Green alga)).